The chain runs to 853 residues: DNA topoisomerase 1 (853 aa).

Positions 3–136 constitute a Toprim domain; sequence KSLVIVESPV…KFRRVVFNEI (134 aa). Mg(2+)-binding residues include glutamate 9 and aspartate 105. The region spanning 152-565 is the Topo IA-type catalytic domain; sequence NMNRVYSQQA…SFFDNFSQQL (414 aa). Residues 186–191 form an interaction with DNA region; the sequence is SAGRVQ. Tyrosine 313 serves as the catalytic O-(5'-phospho-DNA)-tyrosine intermediate. C4-type zinc fingers lie at residues 589 to 621, 649 to 676, and 699 to 724; these read CSLC…EKRC, CKKC…NPSC, and CEKC…NDTC.

The protein belongs to the type IA topoisomerase family. Monomer. Requires Mg(2+) as cofactor.

The catalysed reaction is ATP-independent breakage of single-stranded DNA, followed by passage and rejoining.. Its function is as follows. Releases the supercoiling and torsional tension of DNA, which is introduced during the DNA replication and transcription, by transiently cleaving and rejoining one strand of the DNA duplex. Introduces a single-strand break via transesterification at a target site in duplex DNA. The scissile phosphodiester is attacked by the catalytic tyrosine of the enzyme, resulting in the formation of a DNA-(5'-phosphotyrosyl)-enzyme intermediate and the expulsion of a 3'-OH DNA strand. The free DNA strand then undergoes passage around the unbroken strand, thus removing DNA supercoils. Finally, in the religation step, the DNA 3'-OH attacks the covalent intermediate to expel the active-site tyrosine and restore the DNA phosphodiester backbone. This chain is DNA topoisomerase 1, found in Buchnera aphidicola subsp. Schizaphis graminum (strain Sg).